Reading from the N-terminus, the 310-residue chain is MSGERAKRFPLALEDLKRAPRKSEGRAGERHAAVAGSKAADKPAAVLKPVAVKPAAVRTALPGSAAAKPATAPKPTALKPAMPKPAAPSVAPAGAFALTSERVRERMVERLRANGVTDARVLEAMAAVPRHMFVDPGLATQAYEDSALPIGHQQTISKPSVVARMIELAMAGRTLERVLEIGTGCGYQAAVLSHVARDVYSIERIKPLYERAKLNLRPLRVPNIRLHYGDGRVGLPSAAPFDAIVIAAAGLDVPQALLEQLAIGGRLVAPVGAQSGQHQVLTLVERVAHAQWRESRLDRVFFVPLKSGVI.

2 disordered regions span residues 1–42 and 64–90; these read MSGE…AADK and SAAA…APSV. Residues 14 to 32 are compositionally biased toward basic and acidic residues; the sequence is EDLKRAPRKSEGRAGERHA. Low complexity predominate over residues 64-81; it reads SAAAKPATAPKPTALKPA. Residue serine 157 is part of the active site.

Belongs to the methyltransferase superfamily. L-isoaspartyl/D-aspartyl protein methyltransferase family.

The protein resides in the cytoplasm. It catalyses the reaction [protein]-L-isoaspartate + S-adenosyl-L-methionine = [protein]-L-isoaspartate alpha-methyl ester + S-adenosyl-L-homocysteine. In terms of biological role, catalyzes the methyl esterification of L-isoaspartyl residues in peptides and proteins that result from spontaneous decomposition of normal L-aspartyl and L-asparaginyl residues. It plays a role in the repair and/or degradation of damaged proteins. In Burkholderia lata (strain ATCC 17760 / DSM 23089 / LMG 22485 / NCIMB 9086 / R18194 / 383), this protein is Protein-L-isoaspartate O-methyltransferase.